The chain runs to 378 residues: Nucleosome assembly protein 1;1 (378 aa).

Positions 33-87 (VNALKDKLQSLAGQHTDVLEALSPNVRKRVEYLREIQGQHDEIELKFFEERAALE) form a coiled coil. The short motif at 54-69 (LSPNVRKRVEYLREIQ) is the Nuclear export signal element. The short motif at 230–235 (KKKPKK) is the Nuclear localization signal element. A disordered region spans residues 306 to 378 (AVQAEDFDDM…ADQPADCKQQ (73 aa)). A compositionally biased stretch (acidic residues) spans 308 to 344 (QAEDFDDMEDDEEDDEDDDEDEEEEEEDEDEDEDDEE). Positions 348–352 (KPKKK) match the Nuclear localization signal motif. Low complexity predominate over residues 356–378 (KPKLPSKGGAQGGADQPADCKQQ). Position 375 is a cysteine methyl ester (Cys-375). The S-farnesyl cysteine moiety is linked to residue Cys-375. A propeptide spans 376–378 (KQQ) (removed in mature form).

This sequence belongs to the nucleosome assembly protein (NAP) family.

The protein resides in the nucleus. It localises to the cytoplasm. Its function is as follows. May modulate chromatin structure by regulation of nucleosome assembly/disassembly. The chain is Nucleosome assembly protein 1;1 (NAP1;1) from Oryza sativa subsp. japonica (Rice).